We begin with the raw amino-acid sequence, 325 residues long: Phospho-N-acetylmuramoyl-pentapeptide-transferase (325 aa).

Transmembrane regions (helical) follow at residues 5–25 (VLLL…PIFI), 57–77 (LMIL…LSIF), 81–101 (VLLL…DDFI), 117–137 (LIGQ…MGLS), 146–166 (SLSI…LVGA), 178–198 (GLVA…AWAT), 200–220 (YFEV…FLVF), 227–247 (VFMG…IAIM), 252–272 (ILLI…IIQV), and 304–324 (VTFW…EVWI).

The protein belongs to the glycosyltransferase 4 family. MraY subfamily. Requires Mg(2+) as cofactor.

The protein resides in the cell membrane. The enzyme catalyses UDP-N-acetyl-alpha-D-muramoyl-L-alanyl-gamma-D-glutamyl-meso-2,6-diaminopimeloyl-D-alanyl-D-alanine + di-trans,octa-cis-undecaprenyl phosphate = di-trans,octa-cis-undecaprenyl diphospho-N-acetyl-alpha-D-muramoyl-L-alanyl-D-glutamyl-meso-2,6-diaminopimeloyl-D-alanyl-D-alanine + UMP. Its pathway is cell wall biogenesis; peptidoglycan biosynthesis. Its function is as follows. Catalyzes the initial step of the lipid cycle reactions in the biosynthesis of the cell wall peptidoglycan: transfers peptidoglycan precursor phospho-MurNAc-pentapeptide from UDP-MurNAc-pentapeptide onto the lipid carrier undecaprenyl phosphate, yielding undecaprenyl-pyrophosphoryl-MurNAc-pentapeptide, known as lipid I. The sequence is that of Phospho-N-acetylmuramoyl-pentapeptide-transferase from Halalkalibacterium halodurans (strain ATCC BAA-125 / DSM 18197 / FERM 7344 / JCM 9153 / C-125) (Bacillus halodurans).